Here is a 325-residue protein sequence, read N- to C-terminus: LIM and senescent cell antigen-like-containing domain protein 1 (325 aa).

A2 is subject to N-acetylalanine. LIM zinc-binding domains lie at 10-62 (CERC…CEHD), 71-121 (CHQC…CRPC), 135-184 (CQKC…CLPC), 193-243 (CGAC…CETH), and 252-303 (CFHC…CKKC).

Component of the heterotrimeric IPP (ILK-PINCH-PARVIN) complex composed of ILK, LIMS1/PINCH and PARVA; the complex binds to F-actin via the C-terminal tail of LIMS1 and the N-terminal region of PARVA, promoting F-actin filament bundling. Formation of the IPP complex is dependent on protein kinase C and precedes integrin-mediated cell adhesion and spreading. Competes with LIMS2 for interaction with ILK. Interacts with SH3/SH2 adapter NCK2, thereby linking the complex to cell surface receptors. Interacts (via LIM zinc-binding 5) with TGFB1I1.

The protein resides in the cell junction. Its subcellular location is the focal adhesion. It localises to the cell membrane. Functionally, within the IPP (ILK-PINCH-PARVIN) complex, binds to F-actin, promoting F-actin bundling, a process required to generate force for actin cytoskeleton reorganization and subsequent dynamic cell adhesion events such as cell spreading and migration. The polypeptide is LIM and senescent cell antigen-like-containing domain protein 1 (Lims1) (Mus musculus (Mouse)).